A 337-amino-acid polypeptide reads, in one-letter code: Anaerobic sulfite reductase subunit C (337 aa).

[4Fe-4S] cluster contacts are provided by Cys-115, Cys-121, Cys-153, Cys-157, Cys-180, Cys-183, Cys-186, Cys-190, Cys-212, Cys-215, Cys-218, and Cys-222. Cys-157 contacts siroheme. 4Fe-4S ferredoxin-type domains are found at residues 171–200 (AKMR…CLAL) and 203–232 (GKAV…RKPD).

This sequence belongs to the nitrite and sulfite reductase 4Fe-4S domain family. The anaerobic sulfite reductase seems to consist of three subunits. Requires [4Fe-4S] cluster as cofactor. Siroheme is required as a cofactor.

It is found in the cytoplasm. It carries out the reaction hydrogen sulfide + 3 NAD(+) + 3 H2O = sulfite + 3 NADH + 4 H(+). It functions in the pathway sulfur metabolism; sulfite reduction. This enzyme catalyzes the hydrogen sulfide production from sulfite. It is strictly anaerobic. It is regulated by electron acceptors rather than by cysteine. This Salmonella typhi protein is Anaerobic sulfite reductase subunit C (asrC).